The chain runs to 209 residues: Orotate phosphoribosyltransferase (209 aa).

5-phospho-alpha-D-ribose 1-diphosphate contacts are provided by residues Arg-96, Lys-100, His-102, and 122-130 (EDLISTGGS). Ser-126 contacts orotate.

Belongs to the purine/pyrimidine phosphoribosyltransferase family. PyrE subfamily. Homodimer. It depends on Mg(2+) as a cofactor.

It catalyses the reaction orotidine 5'-phosphate + diphosphate = orotate + 5-phospho-alpha-D-ribose 1-diphosphate. It participates in pyrimidine metabolism; UMP biosynthesis via de novo pathway; UMP from orotate: step 1/2. Functionally, catalyzes the transfer of a ribosyl phosphate group from 5-phosphoribose 1-diphosphate to orotate, leading to the formation of orotidine monophosphate (OMP). This chain is Orotate phosphoribosyltransferase, found in Listeria monocytogenes serotype 4b (strain F2365).